Reading from the N-terminus, the 154-residue chain is Aspartate carbamoyltransferase regulatory chain (154 aa).

Zn(2+) contacts are provided by cysteine 109, cysteine 114, cysteine 138, and cysteine 141.

It belongs to the PyrI family. In terms of assembly, contains catalytic and regulatory chains. The cofactor is Zn(2+).

Involved in allosteric regulation of aspartate carbamoyltransferase. This Photorhabdus laumondii subsp. laumondii (strain DSM 15139 / CIP 105565 / TT01) (Photorhabdus luminescens subsp. laumondii) protein is Aspartate carbamoyltransferase regulatory chain.